Consider the following 386-residue polypeptide: S-adenosylmethionine synthase (386 aa).

Position 16 (His-16) interacts with ATP. Residue Asp-18 participates in Mg(2+) binding. Glu-44 is a binding site for K(+). 2 residues coordinate L-methionine: Glu-57 and Gln-100. The flexible loop stretch occupies residues 100–110 (QSPDINQGVDQ). ATP is bound by residues 164–166 (DGK), 230–231 (RF), Asp-239, 245–246 (RK), Ala-262, and Lys-266. Asp-239 contributes to the L-methionine binding site. Lys-270 contacts L-methionine.

This sequence belongs to the AdoMet synthase family. Homotetramer; dimer of dimers. Requires Mg(2+) as cofactor. It depends on K(+) as a cofactor.

It is found in the cytoplasm. It carries out the reaction L-methionine + ATP + H2O = S-adenosyl-L-methionine + phosphate + diphosphate. Its pathway is amino-acid biosynthesis; S-adenosyl-L-methionine biosynthesis; S-adenosyl-L-methionine from L-methionine: step 1/1. Its function is as follows. Catalyzes the formation of S-adenosylmethionine (AdoMet) from methionine and ATP. The overall synthetic reaction is composed of two sequential steps, AdoMet formation and the subsequent tripolyphosphate hydrolysis which occurs prior to release of AdoMet from the enzyme. The sequence is that of S-adenosylmethionine synthase from Nitratiruptor sp. (strain SB155-2).